Reading from the N-terminus, the 435-residue chain is ATP-dependent protease ATPase subunit HslU (435 aa).

ATP-binding positions include I18, 60–65, D248, E313, and R385; that span reads GVGKTE.

This sequence belongs to the ClpX chaperone family. HslU subfamily. In terms of assembly, a double ring-shaped homohexamer of HslV is capped on each side by a ring-shaped HslU homohexamer. The assembly of the HslU/HslV complex is dependent on binding of ATP.

It is found in the cytoplasm. Functionally, ATPase subunit of a proteasome-like degradation complex; this subunit has chaperone activity. The binding of ATP and its subsequent hydrolysis by HslU are essential for unfolding of protein substrates subsequently hydrolyzed by HslV. HslU recognizes the N-terminal part of its protein substrates and unfolds these before they are guided to HslV for hydrolysis. In Agrobacterium fabrum (strain C58 / ATCC 33970) (Agrobacterium tumefaciens (strain C58)), this protein is ATP-dependent protease ATPase subunit HslU.